The chain runs to 306 residues: WUSCHEL-related homeobox 13 (306 aa).

The segment covering 1 to 11 has biased composition (pro residues); that stretch reads MMALGVPPPPS. 3 disordered regions span residues 1–20, 103–142, and 190–276; these read MMALGVPPPPSRAYVSGPLR, PRSHGHRTGGGGFSLKSSPFSSVGEERVPDPKPRRNPRPE, and SRSK…ARAT. A compositionally biased stretch (basic and acidic residues) spans 126–142; it reads GEERVPDPKPRRNPRPE. Residues 132 to 196 constitute a DNA-binding region (homeobox; WUS-type); that stretch reads DPKPRRNPRP…NRKSRSKNKL (65 aa). Residues 199–210 are compositionally biased toward gly residues; the sequence is GGTGRAGLGLGG. The span at 231-242 shows a compositional bias: pro residues; the sequence is FTPPPILPPQPV. The segment covering 243-270 has biased composition (low complexity); that stretch reads QPQQQLVSPVAAPTSLSSSSSDRSSGSS.

Belongs to the WUS homeobox family.

The protein localises to the nucleus. In terms of biological role, transcription factor which may be involved in developmental processes. The chain is WUSCHEL-related homeobox 13 (WOX13) from Oryza sativa subsp. japonica (Rice).